Reading from the N-terminus, the 185-residue chain is UPF0397 protein LJ_1703 (185 aa).

The next 5 membrane-spanning stretches (helical) occupy residues glycine 6 to alanine 26, phenylalanine 46 to glycine 66, threonine 78 to methionine 98, isoleucine 113 to valine 133, and phenylalanine 147 to isoleucine 167.

The protein belongs to the UPF0397 family.

It localises to the cell membrane. This chain is UPF0397 protein LJ_1703, found in Lactobacillus johnsonii (strain CNCM I-12250 / La1 / NCC 533).